The primary structure comprises 406 residues: Phosphopentomutase (406 aa).

Residues aspartate 10, aspartate 305, histidine 310, aspartate 346, histidine 347, and histidine 358 each coordinate Mn(2+).

This sequence belongs to the phosphopentomutase family. Requires Mn(2+) as cofactor.

Its subcellular location is the cytoplasm. It catalyses the reaction 2-deoxy-alpha-D-ribose 1-phosphate = 2-deoxy-D-ribose 5-phosphate. The catalysed reaction is alpha-D-ribose 1-phosphate = D-ribose 5-phosphate. It functions in the pathway carbohydrate degradation; 2-deoxy-D-ribose 1-phosphate degradation; D-glyceraldehyde 3-phosphate and acetaldehyde from 2-deoxy-alpha-D-ribose 1-phosphate: step 1/2. Functionally, isomerase that catalyzes the conversion of deoxy-ribose 1-phosphate (dRib-1-P) and ribose 1-phosphate (Rib-1-P) to deoxy-ribose 5-phosphate (dRib-5-P) and ribose 5-phosphate (Rib-5-P), respectively. This Agrobacterium fabrum (strain C58 / ATCC 33970) (Agrobacterium tumefaciens (strain C58)) protein is Phosphopentomutase.